The chain runs to 539 residues: T-complex protein 1 subunit delta (539 aa).

The segment at 1 to 28 (MPENVASRSGPPAAGPGNRGKGAYQDRD) is disordered. Arg19 is subject to Omega-N-methylarginine. Residue Lys21 is modified to N6-acetyllysine. A Phosphoserine modification is found at Ser36. Gly53 serves as a coordination point for ADP. Gly53 lines the ATP pocket. Asp104 contributes to the Mg(2+) binding site. ADP-binding residues include Gly105, Thr106, Thr107, Ser108, Asn172, Ser173, and Lys174. The ATP site is built by Gly105 and Thr106. Lys174 lines the ATP pocket. 2 positions are modified to phosphoserine: Ser184 and Ser202. Residues Lys288, Lys302, Lys319, and Lys326 each carry the N6-acetyllysine modification. An ADP-binding site is contributed by Gly425. Ser444 is subject to Phosphoserine. Gln510 is a binding site for ADP.

It belongs to the TCP-1 chaperonin family. As to quaternary structure, component of the chaperonin-containing T-complex (TRiC), a hexadecamer composed of two identical back-to-back stacked rings enclosing a protein folding chamber. Each ring is made up of eight different subunits: TCP1/CCT1, CCT2, CCT3, CCT4, CCT5, CCT6A/CCT6, CCT7, CCT8. Interacts with PACRG. Interacts with DNAAF4. Interacts with DLEC1.

The protein resides in the cytoplasm. The protein localises to the melanosome. It is found in the cytoskeleton. Its subcellular location is the microtubule organizing center. It localises to the centrosome. The protein resides in the cilium basal body. The catalysed reaction is ATP + H2O = ADP + phosphate + H(+). Component of the chaperonin-containing T-complex (TRiC), a molecular chaperone complex that assists the folding of actin, tubulin and other proteins upon ATP hydrolysis. The TRiC complex mediates the folding of WRAP53/TCAB1, thereby regulating telomere maintenance. As part of the TRiC complex may play a role in the assembly of BBSome, a complex involved in ciliogenesis regulating transports vesicles to the cilia. The protein is T-complex protein 1 subunit delta (Cct4) of Rattus norvegicus (Rat).